We begin with the raw amino-acid sequence, 287 residues long: Large ribosomal subunit protein uL2 (287 aa).

Residues Arg-221–Ser-287 are disordered. Over residues Lys-258–Ser-287 the composition is skewed to basic residues.

This sequence belongs to the universal ribosomal protein uL2 family. As to quaternary structure, part of the 50S ribosomal subunit. Forms a bridge to the 30S subunit in the 70S ribosome.

Its function is as follows. One of the primary rRNA binding proteins. Required for association of the 30S and 50S subunits to form the 70S ribosome, for tRNA binding and peptide bond formation. It has been suggested to have peptidyltransferase activity; this is somewhat controversial. Makes several contacts with the 16S rRNA in the 70S ribosome. The polypeptide is Large ribosomal subunit protein uL2 (Prochlorococcus marinus (strain MIT 9215)).